The sequence spans 350 residues: MTFMAIEIPEFIVPFVPWIRGTVGLVLVGAIFLGGMAAVWIERKLSADIQLRYGPSRVGKFGLLQLVADAIKLFTKEDVRPGNADRFLYDNAPVFMLTSLFLMLVAIPVGAVFIDGNLYPLAVTEMDISILFIEAVSAINIFGIFMAAYGSNNKYSLLGAFRNFARMIGYEVPLGIAIVSVAVMTGSLNIIDITSAQGSFVWNIFLQPIGFVVFFIALMADLGRLPFDQNESEEELVAGWVTEYTGMRFGLVFFAEYMHMILGSFLVALLFLGGWNVPAFVANNAVLGLIAPTGILLLKTVLVLMTIIGMRWAVPRFRIDQVVDMSWKKLLPLSLLNLAWAVGLGLYLGA.

A run of 8 helical transmembrane segments spans residues glycine 21–isoleucine 41, valine 94–isoleucine 114, isoleucine 128–alanine 148, proline 173–isoleucine 193, phenylalanine 200–alanine 220, isoleucine 261–valine 281, glycine 288–isoleucine 308, and leucine 330–alanine 350.

It belongs to the complex I subunit 1 family. The FPO complex is composed of at least 13 different subunits. FpoA, FpoH, FpoJ, FpoK, FpoL, FpoM and FpoN proteins constitute the membrane sector of the complex.

The protein resides in the cell membrane. The catalysed reaction is methanophenazine + reduced coenzyme F420-(gamma-L-Glu)(n) = dihydromethanophenazine + oxidized coenzyme F420-(gamma-L-Glu)(n) + H(+). Its function is as follows. Component of the F(420)H(2) dehydrogenase (FPO complex) which is part of the energy-conserving F(420)H(2):heterodisulfide oxidoreductase system. The membrane-bound electron transfer system of the complex plays an important role in the metabolism of methylotrophic methanogens when the organisms grow on methanol or methylamines. Catalyzes the oxidation of methanophenazine to dihydromethanophenazine. It shuttles electrons from F(420)H(2), via FAD and iron-sulfur (Fe-S) centers, to methanophenazine (an electron carrier in the membrane). It couples the redox reaction to proton translocation (for every two electrons transferred, two hydrogen ions are translocated across the cytoplasmic membrane), and thus conserves the redox energy in a proton gradient. It also catalyzes the oxidation of F(420)H(2) with quinones such as 2,3-dimethyl-1,4-naphthoquinone, 2-methyl-1,4-naphthoquinone and tetramethyl-p-benzoquinone. This Methanosarcina mazei (strain ATCC BAA-159 / DSM 3647 / Goe1 / Go1 / JCM 11833 / OCM 88) (Methanosarcina frisia) protein is F(420)H(2) dehydrogenase subunit H.